A 312-amino-acid polypeptide reads, in one-letter code: Golgi to ER traffic protein 2 (312 aa).

Residues 1–175 are Cytoplasmic-facing; the sequence is MSDSPSISAE…VQYNTYRHQV (175 aa). The helical transmembrane segment at 176 to 196 threads the bilayer; that stretch reads WKFRFLAVRYFALLANFIYHF. Residues 197 to 224 are Lumenal-facing; it reads YIIGDSISFASSSHQFIRELIPVEPARS. The helical transmembrane segment at 225–244 threads the bilayer; the sequence is FFTLFSTIEVVIIASYYFLG. The Cytoplasmic segment spans residues 245–288; that stretch reads TKEGFFSTATSNNFVVKLLDMGSMVLPQLQQFKTIAVRLLGYYE. Residues 289–309 traverse the membrane as a helical segment; the sequence is LLAVLLGDLSLVVVLFGLHSV. Residues 310–312 are Lumenal-facing; it reads LGN.

The protein belongs to the GET2 family. As to quaternary structure, component of the Golgi to ER traffic (GET) complex, which is composed of GET1, GET2 and GET3. Within the complex, GET1 and GET2 form a heterotetramer which is stabilized by phosphatidylinositol binding and which binds to the GET3 homodimer.

It localises to the endoplasmic reticulum membrane. Its subcellular location is the golgi apparatus membrane. Required for the post-translational delivery of tail-anchored (TA) proteins to the endoplasmic reticulum. Together with GET1, acts as a membrane receptor for soluble GET3, which recognizes and selectively binds the transmembrane domain of TA proteins in the cytosol. The GET complex cooperates with the HDEL receptor ERD2 to mediate the ATP-dependent retrieval of resident ER proteins that contain a C-terminal H-D-E-L retention signal from the Golgi to the ER. This Scheffersomyces stipitis (strain ATCC 58785 / CBS 6054 / NBRC 10063 / NRRL Y-11545) (Yeast) protein is Golgi to ER traffic protein 2.